The following is a 98-amino-acid chain: Co-chaperonin GroES (98 aa).

Residues 32 to 56 are disordered; sequence NAKEKPQQGEVLAVGPGRRDDEGKR.

It belongs to the GroES chaperonin family. In terms of assembly, heptamer of 7 subunits arranged in a ring. Interacts with the chaperonin GroEL.

Its subcellular location is the cytoplasm. In terms of biological role, together with the chaperonin GroEL, plays an essential role in assisting protein folding. The GroEL-GroES system forms a nano-cage that allows encapsulation of the non-native substrate proteins and provides a physical environment optimized to promote and accelerate protein folding. GroES binds to the apical surface of the GroEL ring, thereby capping the opening of the GroEL channel. The sequence is that of Co-chaperonin GroES from Bifidobacterium animalis subsp. lactis (strain AD011).